The primary structure comprises 329 residues: Gut-specific cysteine proteinase (329 aa).

The first 15 residues, 1-15, serve as a signal peptide directing secretion; it reads MKFLILTALCAVTLA. A propeptide spans 16-84 (activation peptide); sequence FVPINHQSAV…ATEQEVVLAS (69 aa). 6 disulfides stabilise this stretch: Cys-98–Cys-127, Cys-110–Cys-155, Cys-146–Cys-204, Cys-147–Cys-151, Cys-183–Cys-208, and Cys-191–Cys-196. Cys-113 is a catalytic residue. Active-site residues include His-275 and Asn-295.

Belongs to the peptidase C1 family. As to expression, larvae exhibit strong expression in gut cells and weak expression in hypodermal cells. Adults exhibit the reverse: strong expression in hypodermal cells and weaker expression in gut cells.

Thiol protease. Has a role as a digestive enzyme. This Caenorhabditis elegans protein is Gut-specific cysteine proteinase (cpr-1).